The following is a 166-amino-acid chain: Large ribosomal subunit protein uL11 (166 aa).

This sequence belongs to the universal ribosomal protein uL11 family. Part of the ribosomal stalk of the 50S ribosomal subunit. Interacts with L10 and the large rRNA to form the base of the stalk. L10 forms an elongated spine to which L12 dimers bind in a sequential fashion forming a multimeric L10(L12)X complex.

Forms part of the ribosomal stalk which helps the ribosome interact with GTP-bound translation factors. In Methanopyrus kandleri (strain AV19 / DSM 6324 / JCM 9639 / NBRC 100938), this protein is Large ribosomal subunit protein uL11.